The primary structure comprises 188 residues: Adenylate kinase (188 aa).

12–17 provides a ligand contact to ATP; sequence GVGKGT. Residues 32 to 61 are NMP; the sequence is STGDIFRSAMANHTELGDKAKSFMDAGNLV. Residues T33, R38, 59–61, 89–92, and Q96 contribute to the AMP site; these read NLV and GYPR. Positions 130–136 are LID; that stretch reads GRGREDD. R131 lines the ATP pocket. Residues R133 and R144 each coordinate AMP. Position 172 (G172) interacts with ATP.

It belongs to the adenylate kinase family. As to quaternary structure, monomer.

It is found in the cytoplasm. The enzyme catalyses AMP + ATP = 2 ADP. It functions in the pathway purine metabolism; AMP biosynthesis via salvage pathway; AMP from ADP: step 1/1. Its function is as follows. Catalyzes the reversible transfer of the terminal phosphate group between ATP and AMP. Plays an important role in cellular energy homeostasis and in adenine nucleotide metabolism. In Oenococcus oeni (strain ATCC BAA-331 / PSU-1), this protein is Adenylate kinase.